The following is a 420-amino-acid chain: Ribulose bisphosphate carboxylase (420 aa).

Lysine 155 (proton acceptor) is an active-site residue. Lysine 157 contacts substrate. Mg(2+) contacts are provided by lysine 181, aspartate 183, and glutamate 184. Lysine 181 carries the post-translational modification N6-carboxylysine. The active-site Proton acceptor is the histidine 273. Residues arginine 274, histidine 306, 343-345 (SGG), and 365-368 (QAGG) contribute to the substrate site.

It belongs to the RuBisCO large chain family. Type III subfamily. As to quaternary structure, homodimer or homodecamer. In contrast to form I RuBisCO, the form III RuBisCO is composed solely of large subunits. It depends on Mg(2+) as a cofactor.

It carries out the reaction 2 (2R)-3-phosphoglycerate + 2 H(+) = D-ribulose 1,5-bisphosphate + CO2 + H2O. It catalyses the reaction D-ribulose 1,5-bisphosphate + O2 = 2-phosphoglycolate + (2R)-3-phosphoglycerate + 2 H(+). In terms of biological role, catalyzes the addition of molecular CO(2) and H(2)O to ribulose 1,5-bisphosphate (RuBP), generating two molecules of 3-phosphoglycerate (3-PGA). Functions in an archaeal AMP degradation pathway, together with AMP phosphorylase and R15P isomerase. This chain is Ribulose bisphosphate carboxylase, found in Pyrococcus furiosus (strain ATCC 43587 / DSM 3638 / JCM 8422 / Vc1).